A 185-amino-acid polypeptide reads, in one-letter code: Ribosome-recycling factor (185 aa).

This sequence belongs to the RRF family.

Its subcellular location is the cytoplasm. Its function is as follows. Responsible for the release of ribosomes from messenger RNA at the termination of protein biosynthesis. May increase the efficiency of translation by recycling ribosomes from one round of translation to another. The polypeptide is Ribosome-recycling factor (Shewanella baltica (strain OS185)).